Here is a 74-residue protein sequence, read N- to C-terminus: Auswaprin-a (74 aa).

The first 24 residues, 1-24 (MSSGGLLLLLGLLTLWGVLTPVSS), serve as a signal peptide directing secretion. Residues 27-71 (RPKKPGLCPPRPQKPCVKECKNDWSCSGQQKCCNYGCIDECRDPI) enclose the WAP domain. Cystine bridges form between Cys34/Cys59, Cys42/Cys63, Cys46/Cys58, and Cys52/Cys67.

It belongs to the venom waprin family. As to expression, expressed by the venom gland.

The protein resides in the secreted. Damages membranes of susceptible bacteria. Has no hemolytic activity. Not toxic to mice. Does not inhibit the proteinases elastase and cathepsin G. The polypeptide is Auswaprin-a (Pseudechis australis (Mulga snake)).